An 88-amino-acid chain; its full sequence is MKVAILILSILVLAVASETIEEYRDDFAVEELERATCAGQDKPCKETCDCCGERGECVCALSYEGKYRCICRQGNFLIAWHKLASCKK.

Positions 1-17 (MKVAILILSILVLAVAS) are cleaved as a signal peptide. Positions 18 to 34 (ETIEEYRDDFAVEELER) are excised as a propeptide. Cystine bridges form between Cys-37/Cys-51, Cys-44/Cys-57, Cys-48/Cys-86, Cys-50/Cys-71, and Cys-59/Cys-69. Residue Lys-88 is a propeptide.

As to expression, expressed by the venom gland.

The protein localises to the secreted. Functionally, inhibits voltage-gated sodium channels (Nav). Causes scratching, lacrimation, hypersalivation, sweating and agitation followed by spastic paralysis of the anterior and posterior extremities and death at dose levels of 1.62 mg/mouse. Insecticidal to the larval and adult forms of the house fly. This is U2-ctenitoxin-Pn1a from Phoneutria nigriventer (Brazilian armed spider).